Reading from the N-terminus, the 254-residue chain is UPF0246 protein BDI_1226 (254 aa).

It belongs to the UPF0246 family.

The chain is UPF0246 protein BDI_1226 from Parabacteroides distasonis (strain ATCC 8503 / DSM 20701 / CIP 104284 / JCM 5825 / NCTC 11152).